A 435-amino-acid polypeptide reads, in one-letter code: 3-phosphoshikimate 1-carboxyvinyltransferase (435 aa).

Residues Lys22, Ser23, and Arg27 each contribute to the 3-phosphoshikimate site. Residue Lys22 participates in phosphoenolpyruvate binding. Phosphoenolpyruvate contacts are provided by Gly95 and Arg123. 4 residues coordinate 3-phosphoshikimate: Ser168, Gln170, Asp319, and Lys346. Residue Gln170 coordinates phosphoenolpyruvate. Asp319 acts as the Proton acceptor in catalysis. Residues Arg350 and Arg393 each contribute to the phosphoenolpyruvate site.

The protein belongs to the EPSP synthase family. In terms of assembly, monomer.

The protein localises to the cytoplasm. It carries out the reaction 3-phosphoshikimate + phosphoenolpyruvate = 5-O-(1-carboxyvinyl)-3-phosphoshikimate + phosphate. It participates in metabolic intermediate biosynthesis; chorismate biosynthesis; chorismate from D-erythrose 4-phosphate and phosphoenolpyruvate: step 6/7. Catalyzes the transfer of the enolpyruvyl moiety of phosphoenolpyruvate (PEP) to the 5-hydroxyl of shikimate-3-phosphate (S3P) to produce enolpyruvyl shikimate-3-phosphate and inorganic phosphate. This chain is 3-phosphoshikimate 1-carboxyvinyltransferase, found in Chloroflexus aurantiacus (strain ATCC 29364 / DSM 637 / Y-400-fl).